The sequence spans 143 residues: Large ribosomal subunit protein bL17 (143 aa).

It belongs to the bacterial ribosomal protein bL17 family. In terms of assembly, part of the 50S ribosomal subunit. Contacts protein L32.

This chain is Large ribosomal subunit protein bL17, found in Bartonella quintana (strain Toulouse) (Rochalimaea quintana).